The sequence spans 218 residues: Adenylate kinase (218 aa).

An ATP-binding site is contributed by 10 to 15; the sequence is GAGKGT. Residues 30–59 form an NMP region; sequence STGDMLRAAVKAGSEMGLKAKAVMDAGQLV. AMP-binding positions include Thr-31, Arg-36, 57–59, 85–88, and Gln-92; these read QLV and GFPR. An LID region spans residues 122–159; it reads GRRVHEASGRTYHLVYNPPKVEGKDDVTGEDLVQRADD. ATP contacts are provided by residues Arg-123 and 132–133; that span reads TY. AMP contacts are provided by Arg-156 and Arg-167. ATP is bound at residue Gly-203.

The protein belongs to the adenylate kinase family. In terms of assembly, monomer.

The protein resides in the cytoplasm. The catalysed reaction is AMP + ATP = 2 ADP. Its pathway is purine metabolism; AMP biosynthesis via salvage pathway; AMP from ADP: step 1/1. Catalyzes the reversible transfer of the terminal phosphate group between ATP and AMP. Plays an important role in cellular energy homeostasis and in adenine nucleotide metabolism. The protein is Adenylate kinase of Marinomonas sp. (strain MWYL1).